The primary structure comprises 878 residues: Fanconi-associated nuclease 1 homolog (878 aa).

Residues 32-59 (GKTCPLCNIKFSLASYRSHMNVCKVADD) form a UBZ4-type zinc finger. The Zn(2+) site is built by cysteine 35, cysteine 38, histidine 50, and cysteine 54. Residues 88–180 (ENSGQEIPVN…QKSQSESQEA (93 aa)) are disordered. Basic and acidic residues predominate over residues 142-161 (SEVRSVEKEIKKSPVWENRR). Residues 168–179 (QNSQKSQSESQE) show a composition bias toward low complexity. Residues glutamate 695, aspartate 823, glutamate 838, and valine 839 each contribute to the Mn(2+) site. One can recognise a VRR-NUC domain in the interval 757-870 (QETIEDNIRR…GIKAEVCHVE (114 aa)).

Belongs to the FAN1 family. The cofactor is Mn(2+). It depends on Mg(2+) as a cofactor.

It is found in the nucleus. The enzyme catalyses Hydrolytically removes 5'-nucleotides successively from the 3'-hydroxy termini of 3'-hydroxy-terminated oligonucleotides.. Nuclease required for the repair of DNA interstrand cross-links (ICL). Acts as a 5'-3' exonuclease that anchors at a cut end of DNA and cleaves DNA successively at every third nucleotide, allowing to excise an ICL from one strand through flanking incisions. This Caenorhabditis briggsae protein is Fanconi-associated nuclease 1 homolog (fan-1).